The sequence spans 260 residues: Dof zinc finger protein DOF1.2 (260 aa).

The Dof-type zinc-finger motif lies at 38-92 (PACPRCASSNTKFCYYNNYSLSQPRYFCKGCRRYWTKGGSLRNIPVGGGCRKRSR). Residues Cys40, Cys43, Cys65, and Cys68 each coordinate Zn(2+). The disordered stretch occupies residues 83 to 124 (VGGGCRKRSRSRQNSHKRFGRNENRPDGLINQDDGFQSSPPG). Positions 87-101 (CRKRSRSRQNSHKRF) are enriched in basic residues.

It localises to the nucleus. In terms of biological role, transcription factor that binds specifically to a 5'-AA[AG]G-3' consensus core sequence. The polypeptide is Dof zinc finger protein DOF1.2 (DOF1.2) (Arabidopsis thaliana (Mouse-ear cress)).